Reading from the N-terminus, the 142-residue chain is Photosystem II extrinsic protein U (142 aa).

The N-terminal stretch at 1 to 28 is a signal peptide; the sequence is MKKIGLLLTIFSLCLGCLGLVPSDKAHA.

This sequence belongs to the PsbU family. As to quaternary structure, PSII is composed of 1 copy each of membrane proteins PsbA, PsbB, PsbC, PsbD, PsbE, PsbF, PsbH, PsbI, PsbJ, PsbK, PsbL, PsbM, PsbT, PsbX, PsbY, PsbZ, Psb30/Ycf12, peripheral proteins PsbO, CyanoQ (PsbQ), PsbU, PsbV and a large number of cofactors. It forms dimeric complexes.

The protein resides in the cellular thylakoid membrane. Its function is as follows. One of the extrinsic, lumenal subunits of photosystem II (PSII). PSII is a light-driven water plastoquinone oxidoreductase, using light energy to abstract electrons from H(2)O, generating a proton gradient subsequently used for ATP formation. The extrinsic proteins stabilize the structure of photosystem II oxygen-evolving complex (OEC), the ion environment of oxygen evolution and protect the OEC against heat-induced inactivation. The chain is Photosystem II extrinsic protein U from Trichodesmium erythraeum (strain IMS101).